We begin with the raw amino-acid sequence, 101 residues long: NADH-quinone oxidoreductase subunit K (101 aa).

A run of 3 helical transmembrane segments spans residues 4–24 (LGHM…GIFL), 30–50 (IVLL…FVAF), and 62–82 (FVFF…AILV).

This sequence belongs to the complex I subunit 4L family. NDH-1 is composed of 14 different subunits. Subunits NuoA, H, J, K, L, M, N constitute the membrane sector of the complex.

The protein resides in the cell inner membrane. It carries out the reaction a quinone + NADH + 5 H(+)(in) = a quinol + NAD(+) + 4 H(+)(out). In terms of biological role, NDH-1 shuttles electrons from NADH, via FMN and iron-sulfur (Fe-S) centers, to quinones in the respiratory chain. The immediate electron acceptor for the enzyme in this species is believed to be ubiquinone. Couples the redox reaction to proton translocation (for every two electrons transferred, four hydrogen ions are translocated across the cytoplasmic membrane), and thus conserves the redox energy in a proton gradient. The polypeptide is NADH-quinone oxidoreductase subunit K (Stenotrophomonas maltophilia (strain R551-3)).